Reading from the N-terminus, the 357-residue chain is UDP-N-acetylglucosamine--N-acetylmuramyl-(pentapeptide) pyrophosphoryl-undecaprenol N-acetylglucosamine transferase (357 aa).

Residues 14-16 (TAG), R168, S198, and Q292 each bind UDP-N-acetyl-alpha-D-glucosamine.

Belongs to the glycosyltransferase 28 family. MurG subfamily.

The protein resides in the cell membrane. The enzyme catalyses di-trans,octa-cis-undecaprenyl diphospho-N-acetyl-alpha-D-muramoyl-L-alanyl-D-glutamyl-meso-2,6-diaminopimeloyl-D-alanyl-D-alanine + UDP-N-acetyl-alpha-D-glucosamine = di-trans,octa-cis-undecaprenyl diphospho-[N-acetyl-alpha-D-glucosaminyl-(1-&gt;4)]-N-acetyl-alpha-D-muramoyl-L-alanyl-D-glutamyl-meso-2,6-diaminopimeloyl-D-alanyl-D-alanine + UDP + H(+). It functions in the pathway cell wall biogenesis; peptidoglycan biosynthesis. Its function is as follows. Cell wall formation. Catalyzes the transfer of a GlcNAc subunit on undecaprenyl-pyrophosphoryl-MurNAc-pentapeptide (lipid intermediate I) to form undecaprenyl-pyrophosphoryl-MurNAc-(pentapeptide)GlcNAc (lipid intermediate II). The sequence is that of UDP-N-acetylglucosamine--N-acetylmuramyl-(pentapeptide) pyrophosphoryl-undecaprenol N-acetylglucosamine transferase from Oceanobacillus iheyensis (strain DSM 14371 / CIP 107618 / JCM 11309 / KCTC 3954 / HTE831).